Reading from the N-terminus, the 483-residue chain is V-type proton ATPase subunit H (483 aa).

Ser-483 carries the post-translational modification Phosphoserine.

Belongs to the V-ATPase H subunit family. In terms of assembly, V-ATPase is a heteromultimeric enzyme made up of two complexes: the ATP-hydrolytic V1 complex and the proton translocation V0 complex. The V1 complex consists of three catalytic AB heterodimers that form a heterohexamer, three peripheral stalks each consisting of EG heterodimers, one central rotor including subunits D and F, and the regulatory subunits C and H. The proton translocation complex V0 consists of the proton transport subunit a, a ring of proteolipid subunits c9c'', rotary subunit d, subunits e and f, and the accessory subunits ATP6AP1/Ac45 and ATP6AP2/PRR. Interacts with AP2M1. In terms of tissue distribution, expressed in brain (at protein level).

It localises to the cytoplasmic vesicle. The protein resides in the clathrin-coated vesicle membrane. Functionally, subunit of the V1 complex of vacuolar(H+)-ATPase (V-ATPase), a multisubunit enzyme composed of a peripheral complex (V1) that hydrolyzes ATP and a membrane integral complex (V0) that translocates protons. V-ATPase is responsible for acidifying and maintaining the pH of intracellular compartments and in some cell types, is targeted to the plasma membrane, where it is responsible for acidifying the extracellular environment. Subunit H is essential for V-ATPase activity, but not for the assembly of the complex. Involved in the endocytosis mediated by clathrin-coated pits, required for the formation of endosomes. The chain is V-type proton ATPase subunit H (ATP6V1H) from Bos taurus (Bovine).